The following is a 492-amino-acid chain: N-succinylglutamate 5-semialdehyde dehydrogenase (492 aa).

225-230 contributes to the NAD(+) binding site; it reads GSSNTG. Active-site residues include E248 and C282.

It belongs to the aldehyde dehydrogenase family. AstD subfamily.

It carries out the reaction N-succinyl-L-glutamate 5-semialdehyde + NAD(+) + H2O = N-succinyl-L-glutamate + NADH + 2 H(+). It functions in the pathway amino-acid degradation; L-arginine degradation via AST pathway; L-glutamate and succinate from L-arginine: step 4/5. Functionally, catalyzes the NAD-dependent reduction of succinylglutamate semialdehyde into succinylglutamate. The chain is N-succinylglutamate 5-semialdehyde dehydrogenase from Colwellia psychrerythraea (strain 34H / ATCC BAA-681) (Vibrio psychroerythus).